Consider the following 747-residue polypeptide: Homeobox-leucine zipper protein GLABRA 2 (747 aa).

A disordered region spans residues 31–112 (RNASSGSTNP…KKYHRHTTDQ (82 aa)). Over residues 58-68 (EMSSENSGPTR) the composition is skewed to polar residues. The span at 73–90 (EDLEGEDHDDEEEEEEDG) shows a compositional bias: acidic residues. Residues 97–107 (TNKRKRKKYHR) show a composition bias toward basic residues. A DNA-binding region (homeobox) is located at residues 101–160 (KRKKYHRHTTDQIRHMEALFKETPHPDEKQRQQLSKQLGLAPRQVKFWFQNRRTQIKAIQ). Positions 155-223 (QIKAIQERHE…LDKLRAALGR (69 aa)) form a coiled coil. The START domain maps to 250–489 (FALEKSRIAE…LQLHCERLVF (240 aa)).

Belongs to the HD-ZIP homeobox family. Class IV subfamily. In terms of assembly, interacts with GIR1 and GIR2. As to expression, expressed in individual developing trichome cells of the emerging leaf primordia. Expressed in differentiating hairless cells of root epidermis.

It is found in the nucleus. Functionally, transcription factor involved in the determination of epidermal cell identity. Required for correct morphological development and maturation of trichomes. Regulates the frequency of trichome initiation and determines trichome spacing. Acts as a negative factor for root hair development. Required for ectopic repression of root hair development in a subset of epidermal cells. May suppress hair formation in root epidermis by promoting differentiation into hairless epidermal cells. Directly suppresses the bHLH transcription factor genes, RHD6, RSL1, RSL2, LRL1, and LRL2, which have diverse functions in root hair development. Required for normal development of seed coat mucilage. Involved in the control of seed oil accumulation. Acts as a negative regulator of anthocyanin biosynthesis. May directly repress the expression of some component genes from the MYB-bHLH-WD40 (MBW) transcriptional activator complex. The MBW complex activates the transcription of late biosynthesis genes in the flavonoid pathway, leading to the production of anthocyanins. In Arabidopsis thaliana (Mouse-ear cress), this protein is Homeobox-leucine zipper protein GLABRA 2.